The following is a 60-amino-acid chain: Potassium channel toxin MeuTXKalpha3 (60 aa).

A signal peptide spans 1–22 (MKNYCGIITLFLAIISATGVFC). 3 cysteine pairs are disulfide-bonded: cysteine 32–cysteine 50, cysteine 37–cysteine 55, and cysteine 41–cysteine 57. Proline amide is present on proline 59.

The protein belongs to the short scorpion toxin superfamily. Potassium channel inhibitor family. Expressed by the venom gland.

The protein resides in the secreted. Its function is as follows. May block voltage-gated potassium channels (Kv). This Mesobuthus eupeus (Lesser Asian scorpion) protein is Potassium channel toxin MeuTXKalpha3.